A 93-amino-acid chain; its full sequence is MALKIRLTKVGSVHQPLYRVVVAEARSRRDGDAVENLGTYTPKSKGSPIKLNMERVDYWLSKGALPTNTMHAMIKKARRSAAAQAEAAPAASA.

This sequence belongs to the bacterial ribosomal protein bS16 family.

The protein is Small ribosomal subunit protein bS16 of Opitutus terrae (strain DSM 11246 / JCM 15787 / PB90-1).